Consider the following 332-residue polypeptide: Ketol-acid reductoisomerase (NADP(+)) (332 aa).

The 181-residue stretch at 2–182 (AKVYHDTEVS…GATRAGVLET (181 aa)) folds into the KARI N-terminal Rossmann domain. NADP(+)-binding positions include 25–28 (YGSQ), Arg48, Ser53, and 83–86 (DTEQ). The active site involves His108. Residue Gly134 coordinates NADP(+). In terms of domain architecture, KARI C-terminal knotted spans 183–328 (TFKEETETDL…KVLREMMPWL (146 aa)). Residues Asp191, Glu195, Glu227, and Glu231 each coordinate Mg(2+). Ser252 is a substrate binding site.

It belongs to the ketol-acid reductoisomerase family. It depends on Mg(2+) as a cofactor.

It catalyses the reaction (2R)-2,3-dihydroxy-3-methylbutanoate + NADP(+) = (2S)-2-acetolactate + NADPH + H(+). It carries out the reaction (2R,3R)-2,3-dihydroxy-3-methylpentanoate + NADP(+) = (S)-2-ethyl-2-hydroxy-3-oxobutanoate + NADPH + H(+). It functions in the pathway amino-acid biosynthesis; L-isoleucine biosynthesis; L-isoleucine from 2-oxobutanoate: step 2/4. The protein operates within amino-acid biosynthesis; L-valine biosynthesis; L-valine from pyruvate: step 2/4. In terms of biological role, involved in the biosynthesis of branched-chain amino acids (BCAA). Catalyzes an alkyl-migration followed by a ketol-acid reduction of (S)-2-acetolactate (S2AL) to yield (R)-2,3-dihydroxy-isovalerate. In the isomerase reaction, S2AL is rearranged via a Mg-dependent methyl migration to produce 3-hydroxy-3-methyl-2-ketobutyrate (HMKB). In the reductase reaction, this 2-ketoacid undergoes a metal-dependent reduction by NADPH to yield (R)-2,3-dihydroxy-isovalerate. This Dictyoglomus turgidum (strain DSM 6724 / Z-1310) protein is Ketol-acid reductoisomerase (NADP(+)).